Consider the following 186-residue polypeptide: GTP-dependent dephospho-CoA kinase (186 aa).

The GTP site is built by Asp-43, Ile-44, Val-45, Asp-62, Glu-120, and Asp-143.

Belongs to the GTP-dependent DPCK family.

The enzyme catalyses 3'-dephospho-CoA + GTP = GDP + CoA + H(+). The protein operates within cofactor biosynthesis; coenzyme A biosynthesis. In terms of biological role, catalyzes the GTP-dependent phosphorylation of the 3'-hydroxyl group of dephosphocoenzyme A to form coenzyme A (CoA). The protein is GTP-dependent dephospho-CoA kinase of Haloquadratum walsbyi (strain DSM 16790 / HBSQ001).